Consider the following 333-residue polypeptide: Adenosine deaminase (333 aa).

2 residues coordinate Zn(2+): His12 and His14. The substrate site is built by His14, Asp16, and Gly170. His197 serves as a coordination point for Zn(2+). Glu200 acts as the Proton donor in catalysis. Asp278 lines the Zn(2+) pocket. Asp279 serves as a coordination point for substrate.

Belongs to the metallo-dependent hydrolases superfamily. Adenosine and AMP deaminases family. Adenosine deaminase subfamily. It depends on Zn(2+) as a cofactor.

The catalysed reaction is adenosine + H2O + H(+) = inosine + NH4(+). It carries out the reaction 2'-deoxyadenosine + H2O + H(+) = 2'-deoxyinosine + NH4(+). Its function is as follows. Catalyzes the hydrolytic deamination of adenosine and 2-deoxyadenosine. The protein is Adenosine deaminase of Escherichia coli O157:H7.